A 343-amino-acid polypeptide reads, in one-letter code: ATP-dependent 6-phosphofructokinase (343 aa).

Residues G10, 73–74, and 103–106 contribute to the ATP site; these read RV and GEGT. E104 contributes to the Mg(2+) binding site. Residues 126 to 128, R163, 170 to 172, E223, R267, and 273 to 276 each bind substrate; these read TID, MGR, and HIQR. The Proton acceptor role is filled by D128.

Belongs to the phosphofructokinase type A (PFKA) family. Mixed-substrate PFK group III subfamily. Homodimer or homotetramer. Mg(2+) is required as a cofactor.

It is found in the cytoplasm. The enzyme catalyses beta-D-fructose 6-phosphate + ATP = beta-D-fructose 1,6-bisphosphate + ADP + H(+). It catalyses the reaction D-tagatofuranose 6-phosphate + ATP = D-tagatofuranose 1,6-bisphosphate + ADP + H(+). It participates in carbohydrate degradation; glycolysis; D-glyceraldehyde 3-phosphate and glycerone phosphate from D-glucose: step 3/4. Catalyzes the phosphorylation of D-fructose 6-phosphate to fructose 1,6-bisphosphate by ATP, the first committing step of glycolysis. Can also catalyze the phosphorylation of tagatose-6-phosphate. This is ATP-dependent 6-phosphofructokinase from Mycobacterium tuberculosis (strain CDC 1551 / Oshkosh).